Consider the following 93-residue polypeptide: CRISPR-associated endoribonuclease Cas2 (93 aa).

Residue Asp8 coordinates Mg(2+).

This sequence belongs to the CRISPR-associated endoribonuclease Cas2 protein family. As to quaternary structure, homodimer, forms a heterotetramer with a Cas1 homodimer. It depends on Mg(2+) as a cofactor.

In terms of biological role, CRISPR (clustered regularly interspaced short palindromic repeat), is an adaptive immune system that provides protection against mobile genetic elements (viruses, transposable elements and conjugative plasmids). CRISPR clusters contain sequences complementary to antecedent mobile elements and target invading nucleic acids. CRISPR clusters are transcribed and processed into CRISPR RNA (crRNA). Functions as a ssRNA-specific endoribonuclease. Involved in the integration of spacer DNA into the CRISPR cassette. This chain is CRISPR-associated endoribonuclease Cas2, found in Thermofilum pendens (strain DSM 2475 / Hrk 5).